A 155-amino-acid polypeptide reads, in one-letter code: Small ribosomal subunit protein uS7 (155 aa).

It belongs to the universal ribosomal protein uS7 family. As to quaternary structure, part of the 30S ribosomal subunit. Contacts proteins S9 and S11.

Its function is as follows. One of the primary rRNA binding proteins, it binds directly to 16S rRNA where it nucleates assembly of the head domain of the 30S subunit. Is located at the subunit interface close to the decoding center, probably blocks exit of the E-site tRNA. This chain is Small ribosomal subunit protein uS7, found in Corynebacterium diphtheriae (strain ATCC 700971 / NCTC 13129 / Biotype gravis).